Reading from the N-terminus, the 419-residue chain is Histidine--tRNA ligase (419 aa).

This sequence belongs to the class-II aminoacyl-tRNA synthetase family. In terms of assembly, homodimer.

The protein localises to the cytoplasm. The enzyme catalyses tRNA(His) + L-histidine + ATP = L-histidyl-tRNA(His) + AMP + diphosphate + H(+). This is Histidine--tRNA ligase from Mycoplasmoides gallisepticum (strain R(low / passage 15 / clone 2)) (Mycoplasma gallisepticum).